The chain runs to 217 residues: Putative cobalt transport protein CbiM (217 aa).

Helical transmembrane passes span 8–28 (LPPE…VYGA), 44–64 (LIAV…PSVT), 74–94 (GIAV…IVLL), 107–127 (TLGA…WIAF), 139–161 (VFAA…LALA), and 181–201 (IFAV…VMLV).

Belongs to the CbiM family. Forms an energy-coupling factor (ECF) transporter complex composed of an ATP-binding protein (A component, CbiO), a transmembrane protein (T component, CbiQ) and 2 possible substrate-capture proteins (S components, CbiM and CbiN) of unknown stoichimetry.

It is found in the cell membrane. It functions in the pathway cofactor biosynthesis; adenosylcobalamin biosynthesis. Part of the energy-coupling factor (ECF) transporter complex CbiMNOQ involved in cobalt import. In Archaeoglobus fulgidus (strain ATCC 49558 / DSM 4304 / JCM 9628 / NBRC 100126 / VC-16), this protein is Putative cobalt transport protein CbiM.